Reading from the N-terminus, the 199-residue chain is MEWNYVIPGIPDNLFERDEEIPMTKEEIRALALSKLRIKKGDKVLDIGCGTGSITVEASLLVGNSGRVYGIDKEEKAINLTRRNAEKFGVLNNIVLIKGEAPAILSTINEKFDRIFIGGGSEKIKEIISASWEIINKGGRIVIDAILLETVNNALSAMEKIGFVNLEITEVIIAKGMKTKVGTAMMARNPIFIISGEKP.

Residues Thr24, 48–52, Asp72, and Ala101 contribute to the S-adenosyl-L-methionine site; that span reads GCGTG.

This sequence belongs to the methyltransferase superfamily. Archaeal-type CbiT family.

The catalysed reaction is Co-precorrin-6B + S-adenosyl-L-methionine = Co-precorrin-7 + S-adenosyl-L-homocysteine + CO2. It participates in cofactor biosynthesis; adenosylcobalamin biosynthesis; cob(II)yrinate a,c-diamide from sirohydrochlorin (anaerobic route): step 8/10. Its function is as follows. Catalyzes the methylation of C-15 in cobalt-precorrin-6B followed by the decarboxylation of C-12 to form cobalt-precorrin-7. The chain is Probable cobalt-precorrin-6B C(15)-methyltransferase (decarboxylating) from Saccharolobus solfataricus (strain ATCC 35092 / DSM 1617 / JCM 11322 / P2) (Sulfolobus solfataricus).